A 335-amino-acid chain; its full sequence is Pyridoxal 5'-phosphate synthase subunit PdxS (335 aa).

Residue Asp-30 coordinates D-ribose 5-phosphate. Lys-87 serves as the catalytic Schiff-base intermediate with D-ribose 5-phosphate. Gly-159 serves as a coordination point for D-ribose 5-phosphate. Residue Arg-171 participates in D-glyceraldehyde 3-phosphate binding. D-ribose 5-phosphate contacts are provided by residues Gly-257 and 278-279 (GS).

It belongs to the PdxS/SNZ family. In the presence of PdxT, forms a dodecamer of heterodimers.

It carries out the reaction aldehydo-D-ribose 5-phosphate + D-glyceraldehyde 3-phosphate + L-glutamine = pyridoxal 5'-phosphate + L-glutamate + phosphate + 3 H2O + H(+). The protein operates within cofactor biosynthesis; pyridoxal 5'-phosphate biosynthesis. Catalyzes the formation of pyridoxal 5'-phosphate from ribose 5-phosphate (RBP), glyceraldehyde 3-phosphate (G3P) and ammonia. The ammonia is provided by the PdxT subunit. Can also use ribulose 5-phosphate and dihydroxyacetone phosphate as substrates, resulting from enzyme-catalyzed isomerization of RBP and G3P, respectively. The sequence is that of Pyridoxal 5'-phosphate synthase subunit PdxS from Thermococcus gammatolerans (strain DSM 15229 / JCM 11827 / EJ3).